Reading from the N-terminus, the 253-residue chain is GTP cyclohydrolase III 2 (253 aa).

The tract at residues 102 to 125 (LRDAGSAQDENRQEALSHRSPPGF) is disordered.

Belongs to the archaeal-type GTP cyclohydrolase family.

The catalysed reaction is GTP + 3 H2O = 2-amino-5-formylamino-6-(5-phospho-D-ribosylamino)pyrimidin-4(3H)-one + 2 phosphate + 2 H(+). Its function is as follows. Catalyzes the formation of 2-amino-5-formylamino-6-ribofuranosylamino-4(3H)-pyrimidinone ribonucleotide monophosphate and inorganic phosphate from GTP. Also has an independent pyrophosphate phosphohydrolase activity. This is GTP cyclohydrolase III 2 (gch32) from Halobacterium salinarum (strain ATCC 700922 / JCM 11081 / NRC-1) (Halobacterium halobium).